The following is an 83-amino-acid chain: Translation initiation factor IF-1 (83 aa).

Positions 1–72 (MAKEESIEMQ…TRGRIVYREA (72 aa)) constitute an S1-like domain.

Belongs to the IF-1 family. In terms of assembly, component of the 30S ribosomal translation pre-initiation complex which assembles on the 30S ribosome in the order IF-2 and IF-3, IF-1 and N-formylmethionyl-tRNA(fMet); mRNA recruitment can occur at any time during PIC assembly.

It is found in the cytoplasm. Its function is as follows. One of the essential components for the initiation of protein synthesis. Stabilizes the binding of IF-2 and IF-3 on the 30S subunit to which N-formylmethionyl-tRNA(fMet) subsequently binds. Helps modulate mRNA selection, yielding the 30S pre-initiation complex (PIC). Upon addition of the 50S ribosomal subunit IF-1, IF-2 and IF-3 are released leaving the mature 70S translation initiation complex. This Coxiella burnetii (strain Dugway 5J108-111) protein is Translation initiation factor IF-1.